The following is a 143-amino-acid chain: Transcription antitermination protein NusB (143 aa).

This sequence belongs to the NusB family.

Involved in transcription antitermination. Required for transcription of ribosomal RNA (rRNA) genes. Binds specifically to the boxA antiterminator sequence of the ribosomal RNA (rrn) operons. The sequence is that of Transcription antitermination protein NusB from Buchnera aphidicola subsp. Acyrthosiphon pisum (strain APS) (Acyrthosiphon pisum symbiotic bacterium).